A 180-amino-acid chain; its full sequence is NAD(P)H-quinone oxidoreductase subunit I, chloroplastic (180 aa).

2 4Fe-4S ferredoxin-type domains span residues 55-84 (GRIHFEFDKCIACEVCVRVCPIDLPVVDWR) and 95-124 (LNYSIDFGICIFCGNCVEYCPTNCLSMTEE). [4Fe-4S] cluster contacts are provided by Cys-64, Cys-67, Cys-70, Cys-74, Cys-104, Cys-107, Cys-110, and Cys-114.

It belongs to the complex I 23 kDa subunit family. NDH is composed of at least 16 different subunits, 5 of which are encoded in the nucleus. It depends on [4Fe-4S] cluster as a cofactor.

It is found in the plastid. The protein resides in the chloroplast thylakoid membrane. The catalysed reaction is a plastoquinone + NADH + (n+1) H(+)(in) = a plastoquinol + NAD(+) + n H(+)(out). It carries out the reaction a plastoquinone + NADPH + (n+1) H(+)(in) = a plastoquinol + NADP(+) + n H(+)(out). NDH shuttles electrons from NAD(P)H:plastoquinone, via FMN and iron-sulfur (Fe-S) centers, to quinones in the photosynthetic chain and possibly in a chloroplast respiratory chain. The immediate electron acceptor for the enzyme in this species is believed to be plastoquinone. Couples the redox reaction to proton translocation, and thus conserves the redox energy in a proton gradient. This chain is NAD(P)H-quinone oxidoreductase subunit I, chloroplastic, found in Illicium oligandrum (Star anise).